Consider the following 134-residue polypeptide: Arsenate reductase (134 aa).

Active-site nucleophile residues include Cys11, Cys83, and Cys90. 2 disulfides stabilise this stretch: Cys11-Cys83 and Cys83-Cys90.

The protein belongs to the low molecular weight phosphotyrosine protein phosphatase family. Thioredoxin-coupled ArsC subfamily.

The protein resides in the cytoplasm. It carries out the reaction arsenate + [thioredoxin]-dithiol + H(+) = arsenite + [thioredoxin]-disulfide + H2O. Catalyzes the reduction of arsenate [As(V)] to arsenite [As(III)]. This is Arsenate reductase from Bacillus cereus (strain G9842).